The following is a 347-amino-acid chain: Lipoyl synthase (347 aa).

Residues Cys-55, Cys-60, Cys-66, Cys-81, Cys-85, Cys-88, and Ser-292 each coordinate [4Fe-4S] cluster. One can recognise a Radical SAM core domain in the interval 67 to 281; sequence WEDREATFLI…RDYGHDIGFA (215 aa).

This sequence belongs to the radical SAM superfamily. Lipoyl synthase family. [4Fe-4S] cluster serves as cofactor.

Its subcellular location is the cytoplasm. The catalysed reaction is [[Fe-S] cluster scaffold protein carrying a second [4Fe-4S](2+) cluster] + N(6)-octanoyl-L-lysyl-[protein] + 2 oxidized [2Fe-2S]-[ferredoxin] + 2 S-adenosyl-L-methionine + 4 H(+) = [[Fe-S] cluster scaffold protein] + N(6)-[(R)-dihydrolipoyl]-L-lysyl-[protein] + 4 Fe(3+) + 2 hydrogen sulfide + 2 5'-deoxyadenosine + 2 L-methionine + 2 reduced [2Fe-2S]-[ferredoxin]. It functions in the pathway protein modification; protein lipoylation via endogenous pathway; protein N(6)-(lipoyl)lysine from octanoyl-[acyl-carrier-protein]: step 2/2. Functionally, catalyzes the radical-mediated insertion of two sulfur atoms into the C-6 and C-8 positions of the octanoyl moiety bound to the lipoyl domains of lipoate-dependent enzymes, thereby converting the octanoylated domains into lipoylated derivatives. This is Lipoyl synthase from Corynebacterium kroppenstedtii (strain DSM 44385 / JCM 11950 / CIP 105744 / CCUG 35717).